The sequence spans 72 residues: Translational regulator CsrA (72 aa).

It belongs to the CsrA/RsmA family. In terms of assembly, homodimer; the beta-strands of each monomer intercalate to form a hydrophobic core, while the alpha-helices form wings that extend away from the core.

It is found in the cytoplasm. A translational regulator that binds mRNA to regulate translation initiation and/or mRNA stability. Usually binds in the 5'-UTR at or near the Shine-Dalgarno sequence preventing ribosome-binding, thus repressing translation. Its main target seems to be the major flagellin gene, while its function is anatagonized by FliW. This is Translational regulator CsrA from Clostridium novyi (strain NT).